A 320-amino-acid chain; its full sequence is Methionyl-tRNA formyltransferase (320 aa).

A (6S)-5,6,7,8-tetrahydrofolate-binding site is contributed by 114–117 (SLLP).

Belongs to the Fmt family.

It carries out the reaction L-methionyl-tRNA(fMet) + (6R)-10-formyltetrahydrofolate = N-formyl-L-methionyl-tRNA(fMet) + (6S)-5,6,7,8-tetrahydrofolate + H(+). Its function is as follows. Attaches a formyl group to the free amino group of methionyl-tRNA(fMet). The formyl group appears to play a dual role in the initiator identity of N-formylmethionyl-tRNA by promoting its recognition by IF2 and preventing the misappropriation of this tRNA by the elongation apparatus. This is Methionyl-tRNA formyltransferase from Acinetobacter baumannii (strain ACICU).